The chain runs to 344 residues: Probable dual-specificity RNA methyltransferase RlmN (344 aa).

Glutamate 92 functions as the Proton acceptor in the catalytic mechanism. The 228-residue stretch at 98-325 (DEDRATLCVS…TTIRASRGED (228 aa)) folds into the Radical SAM core domain. Cysteines 105 and 330 form a disulfide. Positions 112, 116, and 119 each coordinate [4Fe-4S] cluster. S-adenosyl-L-methionine contacts are provided by residues 157–158 (GE), serine 189, 211–213 (SLH), and histidine 287. The S-methylcysteine intermediate role is filled by cysteine 330.

It belongs to the radical SAM superfamily. RlmN family. Requires [4Fe-4S] cluster as cofactor.

The protein resides in the cytoplasm. The enzyme catalyses adenosine(2503) in 23S rRNA + 2 reduced [2Fe-2S]-[ferredoxin] + 2 S-adenosyl-L-methionine = 2-methyladenosine(2503) in 23S rRNA + 5'-deoxyadenosine + L-methionine + 2 oxidized [2Fe-2S]-[ferredoxin] + S-adenosyl-L-homocysteine. It catalyses the reaction adenosine(37) in tRNA + 2 reduced [2Fe-2S]-[ferredoxin] + 2 S-adenosyl-L-methionine = 2-methyladenosine(37) in tRNA + 5'-deoxyadenosine + L-methionine + 2 oxidized [2Fe-2S]-[ferredoxin] + S-adenosyl-L-homocysteine. Functionally, specifically methylates position 2 of adenine 2503 in 23S rRNA and position 2 of adenine 37 in tRNAs. The sequence is that of Probable dual-specificity RNA methyltransferase RlmN from Bacteroides fragilis (strain ATCC 25285 / DSM 2151 / CCUG 4856 / JCM 11019 / LMG 10263 / NCTC 9343 / Onslow / VPI 2553 / EN-2).